Reading from the N-terminus, the 71-residue chain is Translation initiation factor IF-1 (71 aa).

In terms of domain architecture, S1-like spans methionine 1–histidine 71.

Belongs to the IF-1 family. In terms of assembly, component of the 30S ribosomal translation pre-initiation complex which assembles on the 30S ribosome in the order IF-2 and IF-3, IF-1 and N-formylmethionyl-tRNA(fMet); mRNA recruitment can occur at any time during PIC assembly.

It localises to the cytoplasm. One of the essential components for the initiation of protein synthesis. Stabilizes the binding of IF-2 and IF-3 on the 30S subunit to which N-formylmethionyl-tRNA(fMet) subsequently binds. Helps modulate mRNA selection, yielding the 30S pre-initiation complex (PIC). Upon addition of the 50S ribosomal subunit IF-1, IF-2 and IF-3 are released leaving the mature 70S translation initiation complex. The polypeptide is Translation initiation factor IF-1 (Rickettsia akari (strain Hartford)).